A 166-amino-acid chain; its full sequence is Bacterial non-heme ferritin (166 aa).

The Ferritin-like diiron domain occupies 2 to 145 (LSKELLAALN…THIDYLTRIG (144 aa)). Positions 17, 50, 53, 94, and 127 each coordinate Fe cation.

Belongs to the ferritin family. Prokaryotic subfamily.

The protein localises to the cytoplasm. The enzyme catalyses 4 Fe(2+) + O2 + 6 H2O = 4 iron(III) oxide-hydroxide + 12 H(+). Its function is as follows. Iron-storage protein. In Staphylococcus epidermidis (strain ATCC 35984 / DSM 28319 / BCRC 17069 / CCUG 31568 / BM 3577 / RP62A), this protein is Bacterial non-heme ferritin (ftnA).